Here is a 453-residue protein sequence, read N- to C-terminus: GTPase Der (453 aa).

2 consecutive EngA-type G domains span residues 3–167 and 188–361; these read PIIV…INSK and VKIA…HTSQ. Residues 9–16, 57–61, 119–122, 194–201, 241–245, and 306–309 contribute to the GTP site; these read GRTNVGKS, DTAGI, NKID, GKPNVGKS, DTAGM, and NKCD. Positions 362–446 constitute a KH-like domain; that stretch reads KKIKTSQVMK…PIKIQFKETM (85 aa).

It belongs to the TRAFAC class TrmE-Era-EngA-EngB-Septin-like GTPase superfamily. EngA (Der) GTPase family. As to quaternary structure, associates with the 50S ribosomal subunit.

GTPase that plays an essential role in the late steps of ribosome biogenesis. The sequence is that of GTPase Der from Buchnera aphidicola subsp. Schizaphis graminum (strain Sg).